The chain runs to 313 residues: Protein ABA AND ROS SENSITIVE 1 (313 aa).

Positions 5–12 (AKKKAMFR) match the Nuclear localization signal 1 motif. A C2H2-type zinc finger spans residues 39–61 (CRVCNVVLKSESLWDVHQASRKH). The span at 115-131 (ARAEVEPAKSKNLEQSK) shows a compositional bias: basic and acidic residues. 3 disordered regions span residues 115-189 (ARAE…LPTG), 232-254 (MEEE…QRSY), and 271-313 (ARLA…AQHL). The segment covering 155 to 176 (TDSSNTKTTSEPKQSQTQTTGP) has biased composition (polar residues). Residues 232-248 (MEEEEVDAAETIEEEEQ) show a composition bias toward acidic residues. Residues 232 to 271 (MEEEEVDAAETIEEEEQREQRSYKEKVEILKRKKMELKAA) are a coiled coil. A Nuclear localization signal 2 motif is present at residues 274 to 281 (AKRSKTSE). The segment covering 293-305 (ESPSDEEDDEDSA) has biased composition (acidic residues).

In terms of tissue distribution, mostly expressed in siliques and, to a lower extent, in roots. Barely deteclable in leaves and stems.

It localises to the nucleus. Its subcellular location is the cytoplasm. In terms of biological role, essential for breaking seed dormancy before seed germination. Prevents reactive oxygen species (ROS) accumulation in response to abscisic acid (ABA) and oxidative stress, probably by repressing the accumulation of ABA-induced ROS-scavenging enzymes (e.g. CSD3). In Arabidopsis thaliana (Mouse-ear cress), this protein is Protein ABA AND ROS SENSITIVE 1.